The chain runs to 183 residues: NEDD8-conjugating enzyme Ubc12 (183 aa).

Position 1 is an N-acetylmethionine (Met1). Positions 1–28 (MIKLFSLKQQKKEEESAGGTKGSSKKAS) are disordered. The region spanning 29-173 (AAQLRIQKDI…VQRSMRGGYI (145 aa)) is the UBC core domain. Cys111 functions as the Glycyl thioester intermediate in the catalytic mechanism.

This sequence belongs to the ubiquitin-conjugating enzyme family. UBC12 subfamily. In terms of processing, the acetylation of Met-1 increases affinity for DCUN1D1 by about 2 orders of magnitude and is crucial for NEDD8 transfer to cullins.

It catalyses the reaction [E1 NEDD8-activating enzyme]-S-[NEDD8 protein]-yl-L-cysteine + [E2 NEDD8-conjugating enzyme]-L-cysteine = [E1 NEDD8-activating enzyme]-L-cysteine + [E2 NEDD8-conjugating enzyme]-S-[NEDD8-protein]-yl-L-cysteine.. The protein operates within protein modification; protein neddylation. Functionally, accepts the ubiquitin-like protein NEDD8 from the UBA3-NAE1 E1 complex and catalyzes its covalent attachment to other proteins. The specific interaction with the E3 ubiquitin ligase rbx1, but not rbx2, suggests that the rbx1-ube2m complex neddylates specific target proteins, such as cul1, cul2, cul3 and cul4. Involved in cell proliferation. The sequence is that of NEDD8-conjugating enzyme Ubc12 (ube2m) from Xenopus laevis (African clawed frog).